The chain runs to 259 residues: MILVIDVGNTNCTVGVYEKQKLLKHWRMTTDRHRTSDELGMTVLNFFSYANLTPSDIQGIIISSVVPPIMHAMETMCVRYFNIRPLIVGPGIKTGLNLKVDNPREIGSDRIVNAVAASEEYGTPVIVVDFGTATTFCYIDESGVYQGGAIAPGIMISTEALYNRAAKLPRVDIAESSQIIGKSTVSSMQAGIFYGFVGQCEGIIAEMKKQSNASPVVVATGGLARMITEKSSAVDILDPFLTLKGLELLYRRNKPTTEK.

6–13 (DVGNTNCT) serves as a coordination point for ATP. Residue 107 to 110 (GSDR) coordinates substrate. Residue D109 is the Proton acceptor of the active site. D129 is a K(+) binding site. T132 serves as a coordination point for ATP. A substrate-binding site is contributed by T184.

Belongs to the type III pantothenate kinase family. In terms of assembly, homodimer. The cofactor is NH4(+). It depends on K(+) as a cofactor.

It is found in the cytoplasm. The enzyme catalyses (R)-pantothenate + ATP = (R)-4'-phosphopantothenate + ADP + H(+). It functions in the pathway cofactor biosynthesis; coenzyme A biosynthesis; CoA from (R)-pantothenate: step 1/5. Catalyzes the phosphorylation of pantothenate (Pan), the first step in CoA biosynthesis. This Listeria monocytogenes serovar 1/2a (strain ATCC BAA-679 / EGD-e) protein is Type III pantothenate kinase.